Here is a 109-residue protein sequence, read N- to C-terminus: MKLSRLFDPCNKAGNTRLCIYLSFIYSEVINMALATKVKEFLEEKLKQEKIDRKYLAEVTNIPYTTVSRIMRAEANREFNPEIDTILKIAKYFNCTMDEVIKRKVQNNS.

An HTH cro/C1-type domain is found at 42–100 (LEEKLKQEKIDRKYLAEVTNIPYTTVSRIMRAEANREFNPEIDTILKIAKYFNCTMDEV). A DNA-binding region (H-T-H motif) is located at residues 53 to 72 (RKYLAEVTNIPYTTVSRIMR).

This is an uncharacterized protein from Rickettsia conorii (strain ATCC VR-613 / Malish 7).